The sequence spans 1095 residues: DNA-directed RNA polymerase subunit beta (1095 aa).

The segment at 1069-1095 (DLMQDVNPRRSTPSRPTYESLGKEYEE) is disordered.

This sequence belongs to the RNA polymerase beta chain family. In terms of assembly, in cyanobacteria the RNAP catalytic core is composed of 2 alpha, 1 beta, 1 beta', 1 gamma and 1 omega subunit. When a sigma factor is associated with the core the holoenzyme is formed, which can initiate transcription.

The catalysed reaction is RNA(n) + a ribonucleoside 5'-triphosphate = RNA(n+1) + diphosphate. Functionally, DNA-dependent RNA polymerase catalyzes the transcription of DNA into RNA using the four ribonucleoside triphosphates as substrates. This is DNA-directed RNA polymerase subunit beta from Prochlorococcus marinus (strain NATL2A).